The primary structure comprises 238 residues: Probable 2-phosphosulfolactate phosphatase (238 aa).

Belongs to the ComB family. Requires Mg(2+) as cofactor.

The enzyme catalyses (2R)-O-phospho-3-sulfolactate + H2O = (2R)-3-sulfolactate + phosphate. This Clostridium botulinum (strain Eklund 17B / Type B) protein is Probable 2-phosphosulfolactate phosphatase.